Here is a 491-residue protein sequence, read N- to C-terminus: Katanin p60 ATPase-containing subunit A1 (491 aa).

The interaction with KATNB1 stretch occupies residues 1-29; the sequence is MSLLMISENVKLAREYALLGNYDSAMVYY. Residues 1-75 are interaction with dynein and NDEL1; sequence MSLLMISENV…VKDIMKTLES (75 aa). The interaction with microtubules stretch occupies residues 1–185; the sequence is MSLLMISENV…EPETNKFDST (185 aa). A phosphoserine; by DYRK2 mark is found at Ser42 and Ser109. The tract at residues 87 to 185 is disordered; that stretch reads QHDLPASEGE…EPETNKFDST (99 aa). Residue Thr133 is modified to Phosphothreonine; by DYRK2. Residues 145–169 show a composition bias toward basic and acidic residues; the sequence is HNDRGKAVRCREKKEQNKGREEKNK. Ser170 carries the phosphoserine modification. 249 to 256 contacts ATP; the sequence is GPPGTGKT.

The protein belongs to the AAA ATPase family. Katanin p60 subunit A1 subfamily. As to quaternary structure, can homooligomerize into hexameric rings, which may be promoted by interaction with microtubules. Interacts with KATNB1, which may serve as a targeting subunit. Interacts with ASPM; the katanin complex formation KATNA1:KATNB1 is required for the association of ASPM Interacts with dynein and NDEL1. Associates with the E3 ligase complex containing DYRK2, EDD/UBR5, DDB1 and DCAF1 proteins (EDVP complex). Interacts with KLHL42 (via the kelch domains). Interacts with CUL3; the interaction is enhanced by KLHL42. Interacts with KATNB1 and KATNBL1. Interacts with CAMSAP2 and CAMSAP3; leading to regulate the length of CAMSAP-decorated microtubule stretches. Post-translationally, phosphorylation by DYRK2 triggers ubiquitination and subsequent degradation. Ubiquitinated by the BCR(KLHL42) E3 ubiquitin ligase complex, leading to its proteasomal degradation. Ubiquitinated by the EDVP E3 ligase complex and subsequently targeted for proteasomal degradation.

It is found in the cytoplasm. It localises to the midbody. The protein localises to the cytoskeleton. Its subcellular location is the microtubule organizing center. The protein resides in the centrosome. It is found in the spindle pole. It localises to the spindle. It catalyses the reaction n ATP + n H2O + a microtubule = n ADP + n phosphate + (n+1) alpha/beta tubulin heterodimers.. ATPase activity is stimulated by microtubules, which promote homooligomerization. ATP-dependent microtubule severing is stimulated by interaction with KATNB1. Its function is as follows. Catalytic subunit of a complex which severs microtubules in an ATP-dependent manner. Microtubule severing may promote rapid reorganization of cellular microtubule arrays and the release of microtubules from the centrosome following nucleation. Microtubule release from the mitotic spindle poles may allow depolymerization of the microtubule end proximal to the spindle pole, leading to poleward microtubule flux and poleward motion of chromosome. Microtubule release within the cell body of neurons may be required for their transport into neuronal processes by microtubule-dependent motor proteins. This transport is required for axonal growth. This chain is Katanin p60 ATPase-containing subunit A1, found in Macaca fascicularis (Crab-eating macaque).